The following is a 106-amino-acid chain: NADH dehydrogenase [ubiquinone] iron-sulfur protein 5 (106 aa).

The CHCH domain occupies 30–74; the sequence is AGRCHAFEKEWIECAHGIGYTRAEKECKIEYDDFVECLLRQKTMR. 2 consecutive short sequence motifs (cx9C motif) follow at residues 33 to 43 and 56 to 66; these read CHAFEKEWIEC and CKIEYDDFVEC. Disulfide bonds link Cys-33/Cys-66 and Cys-43/Cys-56. The disordered stretch occupies residues 84 to 106; the sequence is DKLIKEGKYTPPPHHIGKGEPRP.

The protein belongs to the complex I NDUFS5 subunit family. Mammalian complex I is composed of 45 different subunits. This is a component of the iron-sulfur (IP) fragment of the enzyme.

It localises to the mitochondrion inner membrane. Its subcellular location is the mitochondrion intermembrane space. Its function is as follows. Accessory subunit of the mitochondrial membrane respiratory chain NADH dehydrogenase (Complex I), that is believed not to be involved in catalysis. Complex I functions in the transfer of electrons from NADH to the respiratory chain. The immediate electron acceptor for the enzyme is believed to be ubiquinone. The chain is NADH dehydrogenase [ubiquinone] iron-sulfur protein 5 (NDUFS5) from Gorilla gorilla gorilla (Western lowland gorilla).